Consider the following 182-residue polypeptide: ATP synthase subunit b, chloroplastic (182 aa).

Residues 36 to 56 (ILLLLLGLMYVLKEFLGSILV) form a helical membrane-spanning segment.

Belongs to the ATPase B chain family. As to quaternary structure, F-type ATPases have 2 components, F(1) - the catalytic core - and F(0) - the membrane proton channel. F(1) has five subunits: alpha(3), beta(3), gamma(1), delta(1), epsilon(1). F(0) has four main subunits: a(1), b(1), b'(1) and c(10-14). The alpha and beta chains form an alternating ring which encloses part of the gamma chain. F(1) is attached to F(0) by a central stalk formed by the gamma and epsilon chains, while a peripheral stalk is formed by the delta, b and b' chains.

Its subcellular location is the plastid. It is found in the chloroplast thylakoid membrane. In terms of biological role, f(1)F(0) ATP synthase produces ATP from ADP in the presence of a proton or sodium gradient. F-type ATPases consist of two structural domains, F(1) containing the extramembraneous catalytic core and F(0) containing the membrane proton channel, linked together by a central stalk and a peripheral stalk. During catalysis, ATP synthesis in the catalytic domain of F(1) is coupled via a rotary mechanism of the central stalk subunits to proton translocation. Component of the F(0) channel, it forms part of the peripheral stalk, linking F(1) to F(0). The chain is ATP synthase subunit b, chloroplastic from Gracilaria tenuistipitata var. liui (Red alga).